Reading from the N-terminus, the 445-residue chain is UPF0210 protein SPJ_0248 (445 aa).

Belongs to the UPF0210 family. Homodimer.

This chain is UPF0210 protein SPJ_0248, found in Streptococcus pneumoniae (strain JJA).